The sequence spans 369 residues: Histidinol-phosphate aminotransferase (369 aa).

Lys222 bears the N6-(pyridoxal phosphate)lysine mark.

This sequence belongs to the class-II pyridoxal-phosphate-dependent aminotransferase family. Histidinol-phosphate aminotransferase subfamily. As to quaternary structure, homodimer. Pyridoxal 5'-phosphate is required as a cofactor.

The enzyme catalyses L-histidinol phosphate + 2-oxoglutarate = 3-(imidazol-4-yl)-2-oxopropyl phosphate + L-glutamate. The protein operates within amino-acid biosynthesis; L-histidine biosynthesis; L-histidine from 5-phospho-alpha-D-ribose 1-diphosphate: step 7/9. This chain is Histidinol-phosphate aminotransferase, found in Halalkalibacterium halodurans (strain ATCC BAA-125 / DSM 18197 / FERM 7344 / JCM 9153 / C-125) (Bacillus halodurans).